The chain runs to 222 residues: Eukaryotic translation initiation factor 3 subunit K (222 aa).

In terms of domain architecture, PCI spans 46-208 (YDLEANLAVL…KIKTKNITEK (163 aa)).

It belongs to the eIF-3 subunit K family. In terms of assembly, component of the eukaryotic translation initiation factor 3 (eIF-3) complex. The eIF-3 complex interacts with pix.

The protein localises to the cytoplasm. Its function is as follows. Component of the eukaryotic translation initiation factor 3 (eIF-3) complex, which is involved in protein synthesis of a specialized repertoire of mRNAs and, together with other initiation factors, stimulates binding of mRNA and methionyl-tRNAi to the 40S ribosome. The eIF-3 complex specifically targets and initiates translation of a subset of mRNAs involved in cell proliferation. This is Eukaryotic translation initiation factor 3 subunit K from Drosophila erecta (Fruit fly).